Consider the following 612-residue polypeptide: Zinc metalloproteinase-disintegrin-like 2a (612 aa).

Positions 1-20 (MIQVLLVTICLAVFPYQGSS) are cleaved as a signal peptide. The propeptide occupies 21–189 (IILGSGNVND…KKASQLNLTP (169 aa)). The region spanning 199–395 (KYIELVIVAD…NRPPCILNKP (197 aa)) is the Peptidase M12B domain. A Ca(2+)-binding site is contributed by glutamate 202. Asparagine 218 is a glycosylation site (N-linked (GlcNAc...) asparagine). Aspartate 286 is a Ca(2+) binding site. 3 disulfides stabilise this stretch: cysteine 310–cysteine 390, cysteine 350–cysteine 374, and cysteine 352–cysteine 357. Histidine 335 is a binding site for Zn(2+). Residue glutamate 336 is part of the active site. Histidine 339 and histidine 345 together coordinate Zn(2+). Residues cysteine 390, asparagine 393, valine 405, asparagine 408, phenylalanine 410, glutamate 412, glutamate 415, and aspartate 418 each contribute to the Ca(2+) site. The Disintegrin domain occupies 403 to 489 (PPVCGNYFVE…DCPTDNFQRN (87 aa)). Disulfide bonds link cysteine 406–cysteine 435, cysteine 417–cysteine 430, cysteine 419–cysteine 425, cysteine 429–cysteine 452, cysteine 443–cysteine 449, cysteine 448–cysteine 474, cysteine 461–cysteine 481, cysteine 468–cysteine 500, cysteine 493–cysteine 505, cysteine 512–cysteine 562, cysteine 527–cysteine 573, cysteine 540–cysteine 550, cysteine 557–cysteine 599, and cysteine 593–cysteine 605. The D/ECD-tripeptide motif lies at 467-469 (ECD).

This sequence belongs to the venom metalloproteinase (M12B) family. P-III subfamily. It depends on Zn(2+) as a cofactor. Expressed by the venom gland.

It is found in the secreted. Its function is as follows. Snake venom metalloproteinase that impairs hemostasis in the envenomed animal. The polypeptide is Zinc metalloproteinase-disintegrin-like 2a (Crotalus adamanteus (Eastern diamondback rattlesnake)).